Here is a 443-residue protein sequence, read N- to C-terminus: Probable ribonuclease FAU-1 (443 aa).

The protein belongs to the FAU-1 family.

In terms of biological role, probable RNase involved in rRNA stability through maturation and/or degradation of precursor rRNAs. Binds to RNA in loop regions with AU-rich sequences. The sequence is that of Probable ribonuclease FAU-1 from Pyrobaculum aerophilum (strain ATCC 51768 / DSM 7523 / JCM 9630 / CIP 104966 / NBRC 100827 / IM2).